A 433-amino-acid chain; its full sequence is ATP-dependent protease ATPase subunit HslU (433 aa).

ATP-binding positions include Val18, 60 to 65 (GVGKTE), Asp246, Glu311, and Arg383.

This sequence belongs to the ClpX chaperone family. HslU subfamily. In terms of assembly, a double ring-shaped homohexamer of HslV is capped on each side by a ring-shaped HslU homohexamer. The assembly of the HslU/HslV complex is dependent on binding of ATP.

It localises to the cytoplasm. Functionally, ATPase subunit of a proteasome-like degradation complex; this subunit has chaperone activity. The binding of ATP and its subsequent hydrolysis by HslU are essential for unfolding of protein substrates subsequently hydrolyzed by HslV. HslU recognizes the N-terminal part of its protein substrates and unfolds these before they are guided to HslV for hydrolysis. The polypeptide is ATP-dependent protease ATPase subunit HslU (Nitrobacter hamburgensis (strain DSM 10229 / NCIMB 13809 / X14)).